We begin with the raw amino-acid sequence, 339 residues long: Phosphate acyltransferase (339 aa).

Belongs to the PlsX family. As to quaternary structure, homodimer. Probably interacts with PlsY.

The protein resides in the cytoplasm. It catalyses the reaction a fatty acyl-[ACP] + phosphate = an acyl phosphate + holo-[ACP]. It functions in the pathway lipid metabolism; phospholipid metabolism. In terms of biological role, catalyzes the reversible formation of acyl-phosphate (acyl-PO(4)) from acyl-[acyl-carrier-protein] (acyl-ACP). This enzyme utilizes acyl-ACP as fatty acyl donor, but not acyl-CoA. The protein is Phosphate acyltransferase of Vesicomyosocius okutanii subsp. Calyptogena okutanii (strain HA).